The chain runs to 127 residues: Large ribosomal subunit protein eL32B (127 aa).

It belongs to the eukaryotic ribosomal protein eL32 family. In terms of assembly, component of the large ribosomal subunit (LSU). Mature yeast ribosomes consist of a small (40S) and a large (60S) subunit. The 40S small subunit contains 1 molecule of ribosomal RNA (18S rRNA) and at least 33 different proteins. The large 60S subunit contains 3 rRNA molecules (25S, 5.8S and 5S rRNA) and at least 46 different proteins.

Its subcellular location is the cytoplasm. It is found in the nucleus. It localises to the nucleolus. Functionally, component of the ribosome, a large ribonucleoprotein complex responsible for the synthesis of proteins in the cell. The small ribosomal subunit (SSU) binds messenger RNAs (mRNAs) and translates the encoded message by selecting cognate aminoacyl-transfer RNA (tRNA) molecules. The large subunit (LSU) contains the ribosomal catalytic site termed the peptidyl transferase center (PTC), which catalyzes the formation of peptide bonds, thereby polymerizing the amino acids delivered by tRNAs into a polypeptide chain. The nascent polypeptides leave the ribosome through a tunnel in the LSU and interact with protein factors that function in enzymatic processing, targeting, and the membrane insertion of nascent chains at the exit of the ribosomal tunnel. In Schizosaccharomyces pombe (strain 972 / ATCC 24843) (Fission yeast), this protein is Large ribosomal subunit protein eL32B (rpl3201).